The sequence spans 303 residues: Elongation factor Ts (303 aa).

Residues T80–V83 form an involved in Mg(2+) ion dislocation from EF-Tu region.

The protein belongs to the EF-Ts family.

It is found in the cytoplasm. Its function is as follows. Associates with the EF-Tu.GDP complex and induces the exchange of GDP to GTP. It remains bound to the aminoacyl-tRNA.EF-Tu.GTP complex up to the GTP hydrolysis stage on the ribosome. The sequence is that of Elongation factor Ts from Clostridium botulinum (strain Alaska E43 / Type E3).